The primary structure comprises 87 residues: Small ribosomal subunit protein bS20 (87 aa).

It belongs to the bacterial ribosomal protein bS20 family.

Functionally, binds directly to 16S ribosomal RNA. This chain is Small ribosomal subunit protein bS20, found in Beijerinckia indica subsp. indica (strain ATCC 9039 / DSM 1715 / NCIMB 8712).